The primary structure comprises 555 residues: Formate--tetrahydrofolate ligase (555 aa).

Position 64–71 (threonine 64–threonine 71) interacts with ATP.

It belongs to the formate--tetrahydrofolate ligase family.

The enzyme catalyses (6S)-5,6,7,8-tetrahydrofolate + formate + ATP = (6R)-10-formyltetrahydrofolate + ADP + phosphate. Its pathway is one-carbon metabolism; tetrahydrofolate interconversion. This is Formate--tetrahydrofolate ligase from Bacteroides fragilis (strain ATCC 25285 / DSM 2151 / CCUG 4856 / JCM 11019 / LMG 10263 / NCTC 9343 / Onslow / VPI 2553 / EN-2).